Here is a 523-residue protein sequence, read N- to C-terminus: 2-isopropylmalate synthase (523 aa).

A Pyruvate carboxyltransferase domain is found at 5–267 (VIIFDTTLRD…HTNINHHEIW (263 aa)). Mn(2+)-binding residues include D14, H202, H204, and N238. Residues 392-523 (RLDYFSVQSG…HNKENNKEIV (132 aa)) form a regulatory domain region.

The protein belongs to the alpha-IPM synthase/homocitrate synthase family. LeuA type 1 subfamily. Homodimer. Requires Mn(2+) as cofactor.

The protein resides in the cytoplasm. The enzyme catalyses 3-methyl-2-oxobutanoate + acetyl-CoA + H2O = (2S)-2-isopropylmalate + CoA + H(+). It participates in amino-acid biosynthesis; L-leucine biosynthesis; L-leucine from 3-methyl-2-oxobutanoate: step 1/4. Functionally, catalyzes the condensation of the acetyl group of acetyl-CoA with 3-methyl-2-oxobutanoate (2-ketoisovalerate) to form 3-carboxy-3-hydroxy-4-methylpentanoate (2-isopropylmalate). The chain is 2-isopropylmalate synthase from Salmonella arizonae (strain ATCC BAA-731 / CDC346-86 / RSK2980).